The following is a 75-amino-acid chain: Small ribosomal subunit protein bS18 (75 aa).

It belongs to the bacterial ribosomal protein bS18 family. In terms of assembly, part of the 30S ribosomal subunit. Forms a tight heterodimer with protein bS6.

Its function is as follows. Binds as a heterodimer with protein bS6 to the central domain of the 16S rRNA, where it helps stabilize the platform of the 30S subunit. This Klebsiella pneumoniae (strain 342) protein is Small ribosomal subunit protein bS18.